Reading from the N-terminus, the 266-residue chain is Na(+)-translocating NADH-quinone reductase subunit C (266 aa).

Residues Leu16 to Gly36 traverse the membrane as a helical segment. Thr232 carries the post-translational modification FMN phosphoryl threonine.

The protein belongs to the NqrC family. Composed of six subunits; NqrA, NqrB, NqrC, NqrD, NqrE and NqrF. The cofactor is FMN.

It is found in the cell inner membrane. It carries out the reaction a ubiquinone + n Na(+)(in) + NADH + H(+) = a ubiquinol + n Na(+)(out) + NAD(+). NQR complex catalyzes the reduction of ubiquinone-1 to ubiquinol by two successive reactions, coupled with the transport of Na(+) ions from the cytoplasm to the periplasm. NqrA to NqrE are probably involved in the second step, the conversion of ubisemiquinone to ubiquinol. This Yersinia pestis protein is Na(+)-translocating NADH-quinone reductase subunit C.